We begin with the raw amino-acid sequence, 333 residues long: MKKVGTAFLTTLFIFSSFTSAHAEEKKDSKAFIDVSAATLWTAPDSLRPIDVPSATNPVDLWKWTKSMTLDEKLWLTNANKLETQALLGQEVTVVDKKGDWVKVLVHGQPTPRNEEGYPGWMPEKQLTYNQEFADKTNEPFVLVTKPTAILYINPSEKHKSLEVSYNTRLPLLSEDTISYRVLLPNGQKAWLRKNDGTFYRSQNDIPTPAADDLINTGKMFLGLPYIWAGTSGFGFDCSGFTHTIYKSHGITIPRDSGPQSRNGVAVDKEHLQKGDLIFFAHDQGKGSVHHVAMYIGDGNMIHSPRAERSVEIIPLNTPGYIEEYAGARRYLP.

The first 23 residues, 1 to 23 (MKKVGTAFLTTLFIFSSFTSAHA), serve as a signal peptide directing secretion. Substrate-binding positions include glutamate 83, tyrosine 118, 237–239 (DCS), and 256–257 (DS). The NlpC/P60 domain maps to 208–332 (TPAADDLINT…EEYAGARRYL (125 aa)). Cysteine 238 functions as the Nucleophile in the catalytic mechanism. Catalysis depends on histidine 291, which acts as the Proton acceptor. Histidine 303 is an active-site residue.

This sequence belongs to the peptidase C40 family. As to quaternary structure, monomer in solution.

It catalyses the reaction The enzyme releases L-Ala-gamma-D-Glu dipeptides from cell wall peptides via cleavage of an L-Ala-gamma-D-Glu-|-L-Lys bond.. It participates in cell wall degradation; peptidoglycan degradation. Functionally, specifically hydrolyzes gamma-D-glutamyl-L-lysine bonds in murein peptides, releasing L-Ala-D-Glu. This is Gamma-D-glutamyl-L-lysine dipeptidyl-peptidase from Bacillus cereus (strain ATCC 10987 / NRS 248).